The following is a 208-amino-acid chain: Putative ribosomal protein uS2-like (208 aa).

The protein belongs to the universal ribosomal protein uS2 family.

It localises to the plastid. The protein resides in the chloroplast. In Chlamydomonas reinhardtii (Chlamydomonas smithii), this protein is Putative ribosomal protein uS2-like (rps2-2).